Reading from the N-terminus, the 420-residue chain is Histidine--tRNA ligase, chloroplastic (420 aa).

The protein belongs to the class-II aminoacyl-tRNA synthetase family.

It is found in the plastid. It localises to the chloroplast. The enzyme catalyses tRNA(His) + L-histidine + ATP = L-histidyl-tRNA(His) + AMP + diphosphate + H(+). The chain is Histidine--tRNA ligase, chloroplastic from Gracilaria tenuistipitata var. liui (Red alga).